We begin with the raw amino-acid sequence, 317 residues long: Transaldolase (317 aa).

Lys-132 (schiff-base intermediate with substrate) is an active-site residue.

Belongs to the transaldolase family. Type 1 subfamily. In terms of assembly, homodimer.

The protein resides in the cytoplasm. The enzyme catalyses D-sedoheptulose 7-phosphate + D-glyceraldehyde 3-phosphate = D-erythrose 4-phosphate + beta-D-fructose 6-phosphate. Its pathway is carbohydrate degradation; pentose phosphate pathway; D-glyceraldehyde 3-phosphate and beta-D-fructose 6-phosphate from D-ribose 5-phosphate and D-xylulose 5-phosphate (non-oxidative stage): step 2/3. In terms of biological role, transaldolase is important for the balance of metabolites in the pentose-phosphate pathway. The chain is Transaldolase from Edwardsiella ictaluri (strain 93-146).